The chain runs to 226 residues: Small ribosomal subunit protein uS3 (226 aa).

The KH type-2 domain maps to 39–107; sequence VRKFLNKELR…PAQINISEVR (69 aa).

It belongs to the universal ribosomal protein uS3 family. As to quaternary structure, part of the 30S ribosomal subunit. Forms a tight complex with proteins S10 and S14.

In terms of biological role, binds the lower part of the 30S subunit head. Binds mRNA in the 70S ribosome, positioning it for translation. The sequence is that of Small ribosomal subunit protein uS3 from Idiomarina loihiensis (strain ATCC BAA-735 / DSM 15497 / L2-TR).